We begin with the raw amino-acid sequence, 328 residues long: Interferon regulatory factor 1 (328 aa).

Positions 5 to 113 (RMRMRPWLEM…SAVRVYRMLP (109 aa)) form a DNA-binding region, IRF tryptophan pentad repeat. Lysine 78 carries the post-translational modification N6-acetyllysine. The segment at 92 to 164 (EEVKDQSRNK…STLPDDHSSY (73 aa)) is disordered. The segment covering 141–157 (GDSSPDTLSDGLSSSTL) has biased composition (low complexity). Glycyl lysine isopeptide (Lys-Gly) (interchain with G-Cter in SUMO) cross-links involve residues lysine 276 and lysine 300.

The protein belongs to the IRF family. As to quaternary structure, monomer. Homodimer. Interacts with EP300. Interacts with MYD88. Interacts with PIAS3. Interacts with SPOP. Phosphorylated by CK2 and this positively regulates its activity. Post-translationally, sumoylation represses the transcriptional activity and displays enhanced resistance to protein degradation. Sumoylated by UBE2I/UBC9 and SUMO1. Inactivates the tumor suppressor activity. Elevated levels in tumor cells. Major site is Lys-276. Sumoylation is enhanced by PIAS3. Desumoylated by SENP1 in tumor cells and appears to compete with ubiquitination on C-terminal sites. In terms of processing, ubiquitinated in a SPOP-depedent manner. Appears to compete with sumoylation on C-terminal sites.

The protein localises to the nucleus. It is found in the cytoplasm. With respect to regulation, activated by MYD88. In terms of biological role, transcriptional regulator which displays a remarkable functional diversity in the regulation of cellular responses. Regulates transcription of IFN and IFN-inducible genes, host response to viral and bacterial infections, regulation of many genes expressed during hematopoiesis, inflammation, immune responses and cell proliferation and differentiation, regulation of the cell cycle and induction of growth arrest and programmed cell death following DNA damage. Stimulates both innate and acquired immune responses through the activation of specific target genes and can act as a transcriptional activator and repressor regulating target genes by binding to an interferon-stimulated response element (ISRE) in their promoters. Has an essentail role in IFNG-dependent immunity to mycobacteria. Binds to a consensus sequence in gene promoters. Its target genes for transcriptional activation activity include: genes involved in anti-viral response, such as IFN-alpha/beta, RIGI, TNFSF10/TRAIL, ZBP1, OAS1/2, PIAS1/GBP, EIF2AK2/PKR and RSAD2/viperin; antibacterial response, such as GBP2, GBP5 and NOS2/INOS; anti-proliferative response, such as p53/TP53, LOX and CDKN1A; apoptosis, such as BBC3/PUMA, CASP1, CASP7 and CASP8; immune response, such as IL7, IL12A/B and IL15, PTGS2/COX2 and CYBB; DNA damage responses and DNA repair, such as POLQ/POLH; MHC class I expression, such as TAP1, PSMB9/LMP2, PSME1/PA28A, PSME2/PA28B and B2M and MHC class II expression, such as CIITA; metabolic enzymes, such as ACOD1/IRG1. Represses genes involved in anti-proliferative response, such as BIRC5/survivin, CCNB1, CCNE1, CDK1, CDK2 and CDK4 and in immune response, such as FOXP3, IL4, ANXA2 and TLR4. Stimulates p53/TP53-dependent transcription through enhanced recruitment of EP300 leading to increased acetylation of p53/TP53. Plays an important role in immune response directly affecting NK maturation and activity, macrophage production of IL12, Th1 development and maturation of CD8+ T-cells. Also implicated in the differentiation and maturation of dendritic cells and in the suppression of regulatory T (Treg) cells development. Acts as a tumor suppressor and plays a role not only in antagonism of tumor cell growth but also in stimulating an immune response against tumor cells. The protein is Interferon regulatory factor 1 (Irf1) of Rattus norvegicus (Rat).